Reading from the N-terminus, the 200-residue chain is Large ribosomal subunit protein uL18 (200 aa).

Belongs to the universal ribosomal protein uL18 family. In terms of assembly, part of the 50S ribosomal subunit. Contacts the 5S and 23S rRNAs.

In terms of biological role, this is one of the proteins that bind and probably mediate the attachment of the 5S RNA into the large ribosomal subunit, where it forms part of the central protuberance. The sequence is that of Large ribosomal subunit protein uL18 from Thermococcus sibiricus (strain DSM 12597 / MM 739).